The following is a 369-amino-acid chain: Sesquiterpene cyclase hepA (369 aa).

Mg(2+) contacts are provided by aspartate 100, asparagine 248, serine 252, and aspartate 256. A DDXXD motif motif is present at residues 100-104; the sequence is DDEID. Residues 255–262 carry the (N,D)D(L,I,V)X(S,T)XXXE motif motif; sequence NDLLSLRK.

This sequence belongs to the terpene synthase family. Mg(2+) serves as cofactor.

Its function is as follows. Sesquiterpene cyclase; part of the gene cluster that mediates the biosynthesis of heptelidic acid (HA), a sesquiterpene lactone that acts as an inhibitor of glyceraldehyde-3-phosphatedehydrogenase (GAPDH) and a growth inhibitor of the salt-tolerant lactic acid bacteria in soy sauce brewing. The protein is Sesquiterpene cyclase hepA of Aspergillus oryzae (strain ATCC 42149 / RIB 40) (Yellow koji mold).